The chain runs to 431 residues: O-phosphoseryl-tRNA(Sec) selenium transferase (431 aa).

A tetramerization region spans residues 1–36 (MRGLIPDHMLERGRTVLDSYREPVERLLSERRMPEE). Arginine 67 provides a ligand contact to pyridoxal 5'-phosphate. Residues 88 to 98 (GRSGTLVDPQP) are phosphate loop (P-loop). 3 residues coordinate substrate: arginine 89, serine 90, and glutamine 97. Lysine 269 carries the N6-(pyridoxal phosphate)lysine modification. Arginine 298 is a binding site for substrate.

Belongs to the SepSecS family. In terms of assembly, homotetramer. The cofactor is pyridoxal 5'-phosphate.

It catalyses the reaction O-phospho-L-seryl-tRNA(Sec) + selenophosphate + H2O = L-selenocysteinyl-tRNA(Sec) + 2 phosphate. It participates in aminoacyl-tRNA biosynthesis; selenocysteinyl-tRNA(Sec) biosynthesis; selenocysteinyl-tRNA(Sec) from L-seryl-tRNA(Sec) (archaeal/eukaryal route): step 2/2. Its function is as follows. Converts O-phosphoseryl-tRNA(Sec) to selenocysteinyl-tRNA(Sec) required for selenoprotein biosynthesis. The sequence is that of O-phosphoseryl-tRNA(Sec) selenium transferase (spcS) from Methanopyrus kandleri (strain AV19 / DSM 6324 / JCM 9639 / NBRC 100938).